Reading from the N-terminus, the 312-residue chain is MTRAGILGIGSYVGEHVVTNKDFEKRIDTSDEWIRTRTGIEERRFAPDNVDTSDMAYEASVKALKAAGVSAEEIDLILVATVTPDMPFPTVSTLVQQRLGAKKAAAMDISAACAGFIYGLATGQQFIENGGYKHVLVIGVEKLSKITDMTDRNTAVLFGDGAGAAVMGAVSEDRGILAYELGADGEGAMHINQKGEYIQMNGREVFKFAVRQMGESALSVLEKAGLSKEDVDFLIPHQANIRIMEASRERLELPVEKMSTTVKKYGNTSSASIPMAMVDELKDGKIKDGDLLVLVGFGAGLVWGSLALRWGR.

Active-site residues include Cys-113 and His-237. The ACP-binding stretch occupies residues 238 to 242 (QANIR). The active site involves Asn-267.

It belongs to the thiolase-like superfamily. FabH family. As to quaternary structure, homodimer.

It localises to the cytoplasm. It carries out the reaction malonyl-[ACP] + acetyl-CoA + H(+) = 3-oxobutanoyl-[ACP] + CO2 + CoA. It participates in lipid metabolism; fatty acid biosynthesis. Catalyzes the condensation reaction of fatty acid synthesis by the addition to an acyl acceptor of two carbons from malonyl-ACP. Catalyzes the first condensation reaction which initiates fatty acid synthesis and may therefore play a role in governing the total rate of fatty acid production. Possesses both acetoacetyl-ACP synthase and acetyl transacylase activities. Its substrate specificity determines the biosynthesis of branched-chain and/or straight-chain of fatty acids. This is Beta-ketoacyl-[acyl-carrier-protein] synthase III 1 from Halalkalibacterium halodurans (strain ATCC BAA-125 / DSM 18197 / FERM 7344 / JCM 9153 / C-125) (Bacillus halodurans).